The primary structure comprises 319 residues: tRNA-cytidine(32) 2-sulfurtransferase (319 aa).

Residues S49–S54 carry the PP-loop motif motif. Residues C124, C127, and C215 each contribute to the [4Fe-4S] cluster site.

Belongs to the TtcA family. Homodimer. Mg(2+) is required as a cofactor. Requires [4Fe-4S] cluster as cofactor.

The protein localises to the cytoplasm. It catalyses the reaction cytidine(32) in tRNA + S-sulfanyl-L-cysteinyl-[cysteine desulfurase] + AH2 + ATP = 2-thiocytidine(32) in tRNA + L-cysteinyl-[cysteine desulfurase] + A + AMP + diphosphate + H(+). Its pathway is tRNA modification. In terms of biological role, catalyzes the ATP-dependent 2-thiolation of cytidine in position 32 of tRNA, to form 2-thiocytidine (s(2)C32). The sulfur atoms are provided by the cysteine/cysteine desulfurase (IscS) system. This is tRNA-cytidine(32) 2-sulfurtransferase from Shewanella amazonensis (strain ATCC BAA-1098 / SB2B).